The sequence spans 194 residues: dCTP deaminase (194 aa).

DCTP is bound by residues 110 to 115 (RSSLAR), Asp-128, 136 to 138 (VLE), Tyr-171, Lys-178, and Gln-182. The Proton donor/acceptor role is filled by Glu-138.

This sequence belongs to the dCTP deaminase family. In terms of assembly, homotrimer.

It carries out the reaction dCTP + H2O + H(+) = dUTP + NH4(+). It participates in pyrimidine metabolism; dUMP biosynthesis; dUMP from dCTP (dUTP route): step 1/2. Functionally, catalyzes the deamination of dCTP to dUTP. This chain is dCTP deaminase, found in Psychromonas ingrahamii (strain DSM 17664 / CCUG 51855 / 37).